Here is a 468-residue protein sequence, read N- to C-terminus: Cyclin-dependent kinase 14 (468 aa).

Ser-24, Ser-77, and Ser-94 each carry phosphoserine. The disordered stretch occupies residues 103-132; sequence KTSSAGKESPKVRRHSSPSSPTSPKFGKAD. Ser-133 is modified (phosphoserine). The region spanning 134 to 418 is the Protein kinase domain; that stretch reads YEKLEKLGEG…AQAALSHEYF (285 aa). ATP contacts are provided by residues 140 to 148 and Lys-163; that span reads LGEGSYATV. The active-site Proton acceptor is Asp-255. Residues 448–468 are disordered; that stretch reads ESMRAFGKNNSYGKSLSNSKH. The segment covering 455 to 468 has biased composition (polar residues); it reads KNNSYGKSLSNSKH.

This sequence belongs to the protein kinase superfamily. CMGC Ser/Thr protein kinase family. CDC2/CDKX subfamily. Found in a complex with LRP6, CCNY and CAPRIN2 during G2/M stage; CAPRIN2 functions as a scaffold for the complex by binding to CCNY via its N terminus and to CDK14 via its C terminus. Interacts with CCNY; CCNY mediates its recruitment to the plasma membrane and promotes phosphorylation of LRP6. Interacts with CCDN3 and CDKN1A. Interacts with SEPT8. Interacts with 14-3-3 proteina YWHAB, YWHAE, YWHAH and YWHAQ.

The protein resides in the cell membrane. The protein localises to the cytoplasm. It localises to the nucleus. The catalysed reaction is L-seryl-[protein] + ATP = O-phospho-L-seryl-[protein] + ADP + H(+). It carries out the reaction L-threonyl-[protein] + ATP = O-phospho-L-threonyl-[protein] + ADP + H(+). Serine/threonine-protein kinase activity is promoted by associated cyclins CCDN3 and CCNY and repressed by CDKN1A. In terms of biological role, serine/threonine-protein kinase involved in the control of the eukaryotic cell cycle, whose activity is controlled by an associated cyclin. Acts as a cell-cycle regulator of Wnt signaling pathway during G2/M phase by mediating the phosphorylation of LRP6 at 'Ser-1490', leading to the activation of the Wnt signaling pathway. Acts as a regulator of cell cycle progression and cell proliferation via its interaction with CCDN3. Phosphorylates RB1 in vitro, however the relevance of such result remains to be confirmed in vivo. May also play a role in meiosis, neuron differentiation and may indirectly act as a negative regulator of insulin-responsive glucose transport. The chain is Cyclin-dependent kinase 14 (CDK14) from Dasypus novemcinctus (Nine-banded armadillo).